A 289-amino-acid chain; its full sequence is Somatostatin-like receptor F_48D10.1 (289 aa).

Residues 1–57 (MEPLDQTPGFPLSPEPNYWYETTPSLLLVSYPHLLDISSNQSTQSVPFQGSSALLTA) are Extracellular-facing. N40 carries an N-linked (GlcNAc...) asparagine glycan. A helical membrane pass occupies residues 58–79 (VIYITVFVVGLTGNTLAIYVVL). Residues 80–89 (RYAGMKTVTN) lie on the Cytoplasmic side of the membrane. A helical transmembrane segment spans residues 90–110 (IYILNLAVADELYIVGLPFLA). Residues 111–126 (TQNVLSYWPFGSFLCR) are Extracellular-facing. C125 and C221 are disulfide-bonded. A helical transmembrane segment spans residues 127–148 (VVMTADSMNQFTSIFCLTVMSI). Residues 149–170 (DRYLAVVHPIRSTKWRHPRVAK) lie on the Cytoplasmic side of the membrane. The chain crosses the membrane as a helical span at residues 171–191 (VVSAAVWAVSFVVVLPVVIFS). The Extracellular segment spans residues 192 to 240 (DVQVRPSRPLQVGTSSKCLVKRVQETFNSCNMIWPEPKNVWSTAFILYT). A helical membrane pass occupies residues 241–261 (AMVGFFGPLLIICLCYLLIVI). The Cytoplasmic segment spans residues 262 to 289 (KVRHRMSAAQVGAVVSTCPLNICCLSRR).

Belongs to the G-protein coupled receptor 1 family.

It is found in the cell membrane. The protein is Somatostatin-like receptor F_48D10.1 of Takifugu rubripes (Japanese pufferfish).